A 138-amino-acid chain; its full sequence is MLIPRKVKHRKQHHPRQRGIASGGTTVSFGDYGIQALEHAYITNRQIESARIAINRHIKRGGKVWINIFPDRPLTKKPAETRMGSGKGSPEWWVANVKPGRVLFELSYPDEKTARDALTRAIHKLPIKARIVTREENF.

The span at 1–17 (MLIPRKVKHRKQHHPRQ) shows a compositional bias: basic residues. The tract at residues 1 to 23 (MLIPRKVKHRKQHHPRQRGIASG) is disordered.

The protein belongs to the universal ribosomal protein uL16 family. Part of the 50S ribosomal subunit.

Its function is as follows. Binds 23S rRNA and is also seen to make contacts with the A and possibly P site tRNAs. This is Large ribosomal subunit protein uL16 from Mycobacterium sp. (strain JLS).